We begin with the raw amino-acid sequence, 285 residues long: Small ribosomal subunit protein uS2 (285 aa).

The segment at 229–285 (AGLASGDAKPEAGAGEPLAEWEQELLAQANPNAEGSAEAAPAAATEEAPAAQTPADF) is disordered. Residues 257 to 285 (ANPNAEGSAEAAPAAATEEAPAAQTPADF) are compositionally biased toward low complexity.

It belongs to the universal ribosomal protein uS2 family.

This is Small ribosomal subunit protein uS2 from Nocardia farcinica (strain IFM 10152).